A 245-amino-acid polypeptide reads, in one-letter code: Ureidoacrylate amidohydrolase RutB (245 aa).

Asp-41 functions as the Proton acceptor in the catalytic mechanism. The active site involves Lys-150. Cys-183 (nucleophile) is an active-site residue.

This sequence belongs to the isochorismatase family. RutB subfamily.

The enzyme catalyses (Z)-3-ureidoacrylate + H2O + H(+) = (Z)-3-aminoacrylate + NH4(+) + CO2. It catalyses the reaction (Z)-3-ureidoacrylate + H2O = (Z)-3-aminoacrylate + carbamate + H(+). It carries out the reaction (Z)-2-methylureidoacrylate + H2O + H(+) = (Z)-2-methylaminoacrylate + NH4(+) + CO2. In terms of biological role, hydrolyzes ureidoacrylate to form aminoacrylate and carbamate. The carbamate hydrolyzes spontaneously, thereby releasing one of the nitrogen atoms of the pyrimidine ring as ammonia and one of its carbon atoms as CO2. This chain is Ureidoacrylate amidohydrolase RutB, found in Pseudomonas savastanoi pv. phaseolicola (strain 1448A / Race 6) (Pseudomonas syringae pv. phaseolicola (strain 1448A / Race 6)).